The primary structure comprises 430 residues: Histidinol dehydrogenase (430 aa).

The NAD(+) site is built by Tyr129, Gln190, and Asn213. Substrate contacts are provided by Ser236, Gln258, and His261. Gln258 and His261 together coordinate Zn(2+). Residues Glu326 and His327 each act as proton acceptor in the active site. Residues His327, Asp360, Glu414, and His419 each coordinate substrate. Zn(2+) is bound at residue Asp360. His419 serves as a coordination point for Zn(2+).

Belongs to the histidinol dehydrogenase family. Requires Zn(2+) as cofactor.

The enzyme catalyses L-histidinol + 2 NAD(+) + H2O = L-histidine + 2 NADH + 3 H(+). It participates in amino-acid biosynthesis; L-histidine biosynthesis; L-histidine from 5-phospho-alpha-D-ribose 1-diphosphate: step 9/9. In terms of biological role, catalyzes the sequential NAD-dependent oxidations of L-histidinol to L-histidinaldehyde and then to L-histidine. The polypeptide is Histidinol dehydrogenase (Gluconobacter oxydans (strain 621H) (Gluconobacter suboxydans)).